The chain runs to 556 residues: Formate--tetrahydrofolate ligase (556 aa).

65–72 serves as a coordination point for ATP; the sequence is TPAGEGKS.

It belongs to the formate--tetrahydrofolate ligase family.

The catalysed reaction is (6S)-5,6,7,8-tetrahydrofolate + formate + ATP = (6R)-10-formyltetrahydrofolate + ADP + phosphate. Its pathway is one-carbon metabolism; tetrahydrofolate interconversion. The polypeptide is Formate--tetrahydrofolate ligase (Streptococcus thermophilus (strain CNRZ 1066)).